The primary structure comprises 466 residues: tRNA-2-methylthio-N(6)-dimethylallyladenosine synthase (466 aa).

An MTTase N-terminal domain is found at 5–125 (RKLHIKSYGC…LPELLARAGR (121 aa)). Positions 14, 50, 88, 166, 170, and 173 each coordinate [4Fe-4S] cluster. Positions 152 to 384 (RARGVSAFVT…QSLIDSQQAA (233 aa)) constitute a Radical SAM core domain. The 63-residue stretch at 387-449 (KAAIGTVVDV…RYSLLGELVA (63 aa)) folds into the TRAM domain.

This sequence belongs to the methylthiotransferase family. MiaB subfamily. In terms of assembly, monomer. The cofactor is [4Fe-4S] cluster.

The protein resides in the cytoplasm. The enzyme catalyses N(6)-dimethylallyladenosine(37) in tRNA + (sulfur carrier)-SH + AH2 + 2 S-adenosyl-L-methionine = 2-methylsulfanyl-N(6)-dimethylallyladenosine(37) in tRNA + (sulfur carrier)-H + 5'-deoxyadenosine + L-methionine + A + S-adenosyl-L-homocysteine + 2 H(+). Its function is as follows. Catalyzes the methylthiolation of N6-(dimethylallyl)adenosine (i(6)A), leading to the formation of 2-methylthio-N6-(dimethylallyl)adenosine (ms(2)i(6)A) at position 37 in tRNAs that read codons beginning with uridine. This is tRNA-2-methylthio-N(6)-dimethylallyladenosine synthase from Bradyrhizobium sp. (strain BTAi1 / ATCC BAA-1182).